Here is a 171-residue protein sequence, read N- to C-terminus: HTH-type transcriptional regulator AldR (171 aa).

The segment covering 1–14 (MSEGSSITGVQTPG) has biased composition (polar residues). Positions 1–21 (MSEGSSITGVQTPGSPKDVRA) are disordered. Residues 24–85 (LDDIDRRILL…DIDPAAVGLG (62 aa)) enclose the HTH asnC-type domain. Residues 43-62 (NSALAEMVGIAPSTCHGRVR) constitute a DNA-binding region (H-T-H motif).

Homodimer in the absence of L-alanine. Homooctamer in the presence of L-alanine. Homotetramers in the presence of L-cysteine.

In the presence of alanine, AldR changes its quaternary structure from a homodimer to an octamer with an open-ring conformation. The binding affinity of AldR for the ald control region is increased significantly by L-alanine. In vitro, L-cysteine also increases the binding affinity of AldR for the target DNA. Transcriptional regulator that might play a role under hypoxic conditions. Regulates the expression of ald, which encodes L-alanine dehydrogenase. Serves as both an activator for ald expression in the presence of L-alanine and a repressor in the absence of L-alanine. Acts by binding directly to the upstream region of the ald gene. Four AldR-binding sites (O2, O1, O4 and O3) were identified upstream of the ald gene. O2, O1 and O4 are required for the induction of ald expression by alanine, while O3 is directly involved in the repression of ald expression, by occluding the access of RNA polymerase to the ald promoter. In addition to O3, both O1 and O4 are also necessary for full repression of ald expression in the absence of alanine. This chain is HTH-type transcriptional regulator AldR, found in Mycolicibacterium smegmatis (strain ATCC 700084 / mc(2)155) (Mycobacterium smegmatis).